The chain runs to 291 residues: Aspartate carbamoyltransferase catalytic subunit (291 aa).

Residues Arg-47 and Thr-48 each contribute to the carbamoyl phosphate site. Lys-75 is a binding site for L-aspartate. The carbamoyl phosphate site is built by Arg-97, His-126, and Gln-129. L-aspartate-binding residues include Arg-159 and Arg-213. The carbamoyl phosphate site is built by Gly-251 and Pro-252.

The protein belongs to the aspartate/ornithine carbamoyltransferase superfamily. ATCase family. Heterododecamer (2C3:3R2) of six catalytic PyrB chains organized as two trimers (C3), and six regulatory PyrI chains organized as three dimers (R2).

The catalysed reaction is carbamoyl phosphate + L-aspartate = N-carbamoyl-L-aspartate + phosphate + H(+). It functions in the pathway pyrimidine metabolism; UMP biosynthesis via de novo pathway; (S)-dihydroorotate from bicarbonate: step 2/3. Its function is as follows. Catalyzes the condensation of carbamoyl phosphate and aspartate to form carbamoyl aspartate and inorganic phosphate, the committed step in the de novo pyrimidine nucleotide biosynthesis pathway. The protein is Aspartate carbamoyltransferase catalytic subunit of Aquifex aeolicus (strain VF5).